We begin with the raw amino-acid sequence, 636 residues long: Putative cysteine-rich receptor-like protein kinase 33 (636 aa).

An N-terminal signal peptide occupies residues 1–25; the sequence is MRKTKKISFLIFWVVLISIIGAISS. 2 consecutive Gnk2-homologous domains span residues 26-128 and 138-245; these read QQCN…NSSF and YMEH…LYPF. Residues 26 to 266 lie on the Extracellular side of the membrane; it reads QQCNETGYFE…PGSKRNISVG (241 aa). 10 N-linked (GlcNAc...) asparagine glycosylation sites follow: asparagine 29, asparagine 63, asparagine 105, asparagine 125, asparagine 149, asparagine 173, asparagine 185, asparagine 188, asparagine 250, and asparagine 262. The chain crosses the membrane as a helical span at residues 267–287; sequence FFVAIVVATGVVISVLSTLVV. Residues 288-636 are Cytoplasmic-facing; that stretch reads VLVCRKRKTD…DSLIDDLVPR (349 aa). One can recognise a Protein kinase domain in the interval 321-600; the sequence is FSKCNMLGQG…MMLTSNSITL (280 aa). ATP contacts are provided by residues 327 to 335 and lysine 349; that span reads LGQGGFGEV. The residue at position 394 (tyrosine 394) is a Phosphotyrosine. Aspartate 446 functions as the Proton acceptor in the catalytic mechanism. At serine 450 the chain carries Phosphoserine. Threonine 486 bears the Phosphothreonine mark. The residue at position 494 (tyrosine 494) is a Phosphotyrosine.

The protein belongs to the protein kinase superfamily. Ser/Thr protein kinase family. CRK subfamily.

Its subcellular location is the membrane. The enzyme catalyses L-seryl-[protein] + ATP = O-phospho-L-seryl-[protein] + ADP + H(+). It carries out the reaction L-threonyl-[protein] + ATP = O-phospho-L-threonyl-[protein] + ADP + H(+). The protein is Putative cysteine-rich receptor-like protein kinase 33 (CRK33) of Arabidopsis thaliana (Mouse-ear cress).